Consider the following 524-residue polypeptide: Protopine 6-monooxygenase (524 aa).

The next 3 membrane-spanning stretches (helical) occupy residues 4–24 (LMLA…VFLY), 232–252 (LASL…DIFQ), and 319–339 (MIMG…SLLM). Residue Cys462 coordinates heme.

Belongs to the cytochrome P450 family. Heme serves as cofactor.

It is found in the endoplasmic reticulum membrane. The enzyme catalyses protopine + reduced [NADPH--hemoprotein reductase] + O2 = 6-hydroxyprotopine + oxidized [NADPH--hemoprotein reductase] + H2O + H(+). Its pathway is alkaloid biosynthesis. Catalyzes the conversion of protopine and allocryptopine to dihydrosanguinarine and dihydrochelerythrine, respectively, in the biosynthesis of isoquinoline alkaloid sanguinarine. The polypeptide is Protopine 6-monooxygenase (CYP82N2v2) (Eschscholzia californica (California poppy)).